A 258-amino-acid polypeptide reads, in one-letter code: E3 ubiquitin-protein ligase RNF170 (258 aa).

Over 1-24 the chain is Lumenal; sequence MAKYQGEVQSLKLDDDSVIEGVSD. The chain crosses the membrane as a helical span at residues 25-45; the sequence is QVLVAVVVSFALIATLVYALF. At 46-201 the chain is on the cytoplasmic side; the sequence is RNVHQNIHPE…GGLFWMFRIR (156 aa). The RING-type zinc finger occupies 87–130; that stretch reads CPICLHQASFPVETNCGHLFCGACIIAYWRYGSWLGAISCPICR. Residues 202 to 222 form a helical membrane-spanning segment; the sequence is IILCLMGAFFYLISPLDFVPE. Position 223 (A223) is a topological domain, lumenal. The helical transmembrane segment at 224–244 threads the bilayer; that stretch reads LFGILGFLDDFFVIFLLLIYI. The Cytoplasmic segment spans residues 245–258; that stretch reads SIMYREVITQRLTR.

In terms of assembly, (Microbial infection) Interacts with human cytomegalovirus protein NEC2/UL50; this interaction promotes of UBA7 ubiquitination and subsequent proteasomal degradation. Constitutively associated with the ERLIN1/ERLIN 2 complex. Interacts with activated ITPR1. As to expression, expressed in the spinal cord.

The protein localises to the endoplasmic reticulum membrane. It carries out the reaction S-ubiquitinyl-[E2 ubiquitin-conjugating enzyme]-L-cysteine + [acceptor protein]-L-lysine = [E2 ubiquitin-conjugating enzyme]-L-cysteine + N(6)-ubiquitinyl-[acceptor protein]-L-lysine.. Its pathway is protein modification; protein ubiquitination. Its function is as follows. E3 ubiquitin-protein ligase that plays an essential role in stimulus-induced inositol 1,4,5-trisphosphate receptor type 1 (ITPR1) ubiquitination and degradation via the endoplasmic reticulum-associated degradation (ERAD) pathway. Also involved in ITPR1 turnover in resting cells. Selectively inhibits the TLR3-triggered innate immune response by promoting the 'Lys-48'-linked polyubiquitination and degradation of TLR3. The polypeptide is E3 ubiquitin-protein ligase RNF170 (RNF170) (Homo sapiens (Human)).